Here is a 349-residue protein sequence, read N- to C-terminus: tRNA pseudouridine synthase D (349 aa).

Phe27 is a substrate binding site. Asp80 functions as the Nucleophile in the catalytic mechanism. Position 129 (Asn129) interacts with substrate. The TRUD domain maps to 155 to 303 (GVPNYFGAQR…VEAARRAMLL (149 aa)). Phe329 provides a ligand contact to substrate.

It belongs to the pseudouridine synthase TruD family.

The catalysed reaction is uridine(13) in tRNA = pseudouridine(13) in tRNA. Responsible for synthesis of pseudouridine from uracil-13 in transfer RNAs. This chain is tRNA pseudouridine synthase D, found in Escherichia coli O9:H4 (strain HS).